The following is a 167-amino-acid chain: Sporulation membrane protein YtrI (167 aa).

Residues 15–35 traverse the membrane as a helical segment; that stretch reads FFAGMMCGAVISWFFFLFTYG.

It localises to the cell membrane. Its function is as follows. Involved in sporulation. In Bacillus subtilis (strain 168), this protein is Sporulation membrane protein YtrI (ytrI).